The chain runs to 351 residues: Phospho-N-acetylmuramoyl-pentapeptide-transferase (351 aa).

Helical transmembrane passes span 17–37, 62–82, 85–105, 130–150, 163–183, 190–210, 230–250, 254–274, 281–301, and 328–348; these read MAYATIFAFLLSLIVGPHIIL, GIPTMGGILIFFCVFISLVFW, ILNVYFLIIVFVMFGFAFLGF, IIFSFISVSILYYLGGEHVSI, LGVFYIPFGMFILIAASNSFN, GLAIGLSIVITGALIIIAYIT, LVIFLGALLGGSFGFLWFNAY, IMMGDTGSLALGAILGMTALI, FSILAGVFIIETMSVIIQVIV, and QVVIRFWIIGLIFAIIALSTI.

The protein belongs to the glycosyltransferase 4 family. MraY subfamily. Requires Mg(2+) as cofactor.

The protein localises to the cell inner membrane. It carries out the reaction UDP-N-acetyl-alpha-D-muramoyl-L-alanyl-gamma-D-glutamyl-meso-2,6-diaminopimeloyl-D-alanyl-D-alanine + di-trans,octa-cis-undecaprenyl phosphate = di-trans,octa-cis-undecaprenyl diphospho-N-acetyl-alpha-D-muramoyl-L-alanyl-D-glutamyl-meso-2,6-diaminopimeloyl-D-alanyl-D-alanine + UMP. The protein operates within cell wall biogenesis; peptidoglycan biosynthesis. Catalyzes the initial step of the lipid cycle reactions in the biosynthesis of the cell wall peptidoglycan: transfers peptidoglycan precursor phospho-MurNAc-pentapeptide from UDP-MurNAc-pentapeptide onto the lipid carrier undecaprenyl phosphate, yielding undecaprenyl-pyrophosphoryl-MurNAc-pentapeptide, known as lipid I. This Borreliella afzelii (strain PKo) (Borrelia afzelii) protein is Phospho-N-acetylmuramoyl-pentapeptide-transferase.